The sequence spans 156 residues: Small ribosomal subunit protein uS7 (156 aa).

It belongs to the universal ribosomal protein uS7 family. In terms of assembly, part of the 30S ribosomal subunit. Contacts proteins S9 and S11.

In terms of biological role, one of the primary rRNA binding proteins, it binds directly to 16S rRNA where it nucleates assembly of the head domain of the 30S subunit. Is located at the subunit interface close to the decoding center, probably blocks exit of the E-site tRNA. The protein is Small ribosomal subunit protein uS7 of Baumannia cicadellinicola subsp. Homalodisca coagulata.